The following is a 239-amino-acid chain: LexA repressor (239 aa).

Positions 27–47 form a DNA-binding region, H-T-H motif; it reads FDEMKDALDLASKSGIHRLIT. Active-site for autocatalytic cleavage activity residues include serine 159 and lysine 197.

Belongs to the peptidase S24 family. Homodimer.

The catalysed reaction is Hydrolysis of Ala-|-Gly bond in repressor LexA.. In terms of biological role, represses a number of genes involved in the response to DNA damage (SOS response), including recA and lexA. In the presence of single-stranded DNA, RecA interacts with LexA causing an autocatalytic cleavage which disrupts the DNA-binding part of LexA, leading to derepression of the SOS regulon and eventually DNA repair. The protein is LexA repressor of Rhizobium radiobacter (Agrobacterium tumefaciens).